The following is a 321-amino-acid chain: Auxin-responsive protein IAA8 (321 aa).

The short motif at 54–58 (LRLGL) is the EAR-like (transcriptional repression) element. The PB1 domain maps to 199-301 (VLFVKVSMDG…TCQKLKIMKG (103 aa)).

The protein belongs to the Aux/IAA family. As to quaternary structure, homodimers and heterodimers. Interacts with TPL. As to expression, highly expressed in the whole plant.

It is found in the nucleus. Its function is as follows. Aux/IAA proteins are short-lived transcriptional factors that function as repressors of early auxin response genes at low auxin concentrations. Repression is thought to result from the interaction with auxin response factors (ARFs), proteins that bind to the auxin-responsive promoter element (AuxRE). Formation of heterodimers with ARF proteins may alter their ability to modulate early auxin response genes expression. This Arabidopsis thaliana (Mouse-ear cress) protein is Auxin-responsive protein IAA8 (IAA8).